A 188-amino-acid chain; its full sequence is Glutathione S-transferase 2 (188 aa).

The GST N-terminal domain maps to 2–79 (VHYKLMCFDV…FLARQYGYSG (78 aa)). Glutathione-binding positions include K43, 49-51 (GQL), and 63-64 (QS). The region spanning 81–188 (TPTEEMQVDS…PHLNVFIRKL (108 aa)) is the GST C-terminal domain.

It belongs to the GST superfamily. Sigma family.

It carries out the reaction RX + glutathione = an S-substituted glutathione + a halide anion + H(+). Functionally, conjugation of reduced glutathione to a wide number of exogenous and endogenous hydrophobic electrophiles. The sequence is that of Glutathione S-transferase 2 (gst-2) from Caenorhabditis elegans.